Consider the following 101-residue polypeptide: Small ribosomal subunit protein uS14 (101 aa).

It belongs to the universal ribosomal protein uS14 family. As to quaternary structure, part of the 30S ribosomal subunit. Contacts proteins S3 and S10.

Functionally, binds 16S rRNA, required for the assembly of 30S particles and may also be responsible for determining the conformation of the 16S rRNA at the A site. The chain is Small ribosomal subunit protein uS14 from Vibrio campbellii (strain ATCC BAA-1116).